We begin with the raw amino-acid sequence, 438 residues long: Aspartate--tRNA(Asp) ligase (438 aa).

E170 is a binding site for L-aspartate. An aspartate region spans residues 192-195; that stretch reads QLYK. R214 contributes to the L-aspartate binding site. ATP is bound by residues 214–216, 222–224, and E361; these read RAE and RHL. Mg(2+)-binding residues include E361 and S364. L-aspartate is bound by residues S364 and R368. 409-412 is a binding site for ATP; the sequence is GAER.

It belongs to the class-II aminoacyl-tRNA synthetase family. Type 2 subfamily. As to quaternary structure, homodimer. Requires Mg(2+) as cofactor.

The protein resides in the cytoplasm. It carries out the reaction tRNA(Asp) + L-aspartate + ATP = L-aspartyl-tRNA(Asp) + AMP + diphosphate. Catalyzes the attachment of L-aspartate to tRNA(Asp) in a two-step reaction: L-aspartate is first activated by ATP to form Asp-AMP and then transferred to the acceptor end of tRNA(Asp). The sequence is that of Aspartate--tRNA(Asp) ligase from Pyrococcus furiosus (strain ATCC 43587 / DSM 3638 / JCM 8422 / Vc1).